Reading from the N-terminus, the 874-residue chain is Alanine--tRNA ligase (874 aa).

Positions 564, 568, 665, and 669 each coordinate Zn(2+).

It belongs to the class-II aminoacyl-tRNA synthetase family. The cofactor is Zn(2+).

It is found in the cytoplasm. It carries out the reaction tRNA(Ala) + L-alanine + ATP = L-alanyl-tRNA(Ala) + AMP + diphosphate. Its function is as follows. Catalyzes the attachment of alanine to tRNA(Ala) in a two-step reaction: alanine is first activated by ATP to form Ala-AMP and then transferred to the acceptor end of tRNA(Ala). Also edits incorrectly charged Ser-tRNA(Ala) and Gly-tRNA(Ala) via its editing domain. In Burkholderia orbicola (strain MC0-3), this protein is Alanine--tRNA ligase.